The primary structure comprises 283 residues: Bifunctional protein FolD (283 aa).

NADP(+)-binding positions include 165-167 (GAS) and serine 190.

It belongs to the tetrahydrofolate dehydrogenase/cyclohydrolase family. In terms of assembly, homodimer.

It carries out the reaction (6R)-5,10-methylene-5,6,7,8-tetrahydrofolate + NADP(+) = (6R)-5,10-methenyltetrahydrofolate + NADPH. The catalysed reaction is (6R)-5,10-methenyltetrahydrofolate + H2O = (6R)-10-formyltetrahydrofolate + H(+). It functions in the pathway one-carbon metabolism; tetrahydrofolate interconversion. Its function is as follows. Catalyzes the oxidation of 5,10-methylenetetrahydrofolate to 5,10-methenyltetrahydrofolate and then the hydrolysis of 5,10-methenyltetrahydrofolate to 10-formyltetrahydrofolate. In Cupriavidus pinatubonensis (strain JMP 134 / LMG 1197) (Cupriavidus necator (strain JMP 134)), this protein is Bifunctional protein FolD.